A 339-amino-acid polypeptide reads, in one-letter code: Lipoyl synthase (339 aa).

The disordered stretch occupies residues 13–35 (RPKLDAPARPRHPEKAHRPDTAI). Residues Cys68, Cys73, Cys79, Cys94, Cys98, Cys101, and Ser307 each contribute to the [4Fe-4S] cluster site. The 217-residue stretch at 80-296 (WEKRHATFMI…ETTAYAKGFL (217 aa)) folds into the Radical SAM core domain.

Belongs to the radical SAM superfamily. Lipoyl synthase family. It depends on [4Fe-4S] cluster as a cofactor.

The protein localises to the cytoplasm. The enzyme catalyses [[Fe-S] cluster scaffold protein carrying a second [4Fe-4S](2+) cluster] + N(6)-octanoyl-L-lysyl-[protein] + 2 oxidized [2Fe-2S]-[ferredoxin] + 2 S-adenosyl-L-methionine + 4 H(+) = [[Fe-S] cluster scaffold protein] + N(6)-[(R)-dihydrolipoyl]-L-lysyl-[protein] + 4 Fe(3+) + 2 hydrogen sulfide + 2 5'-deoxyadenosine + 2 L-methionine + 2 reduced [2Fe-2S]-[ferredoxin]. It participates in protein modification; protein lipoylation via endogenous pathway; protein N(6)-(lipoyl)lysine from octanoyl-[acyl-carrier-protein]: step 2/2. Catalyzes the radical-mediated insertion of two sulfur atoms into the C-6 and C-8 positions of the octanoyl moiety bound to the lipoyl domains of lipoate-dependent enzymes, thereby converting the octanoylated domains into lipoylated derivatives. The sequence is that of Lipoyl synthase from Methylorubrum extorquens (strain PA1) (Methylobacterium extorquens).